The following is a 414-amino-acid chain: Tyrosine--tRNA ligase (414 aa).

Tyr-38 serves as a coordination point for L-tyrosine. The 'HIGH' region signature appears at 43–52 (PTATSLHLGN). Residues Tyr-165 and Gln-169 each contribute to the L-tyrosine site. The short motif at 228–232 (KFGKS) is the 'KMSKS' region element. ATP is bound at residue Lys-231. In terms of domain architecture, S4 RNA-binding spans 349–414 (FNANQIIDLG…KKYFFIIELI (66 aa)).

It belongs to the class-I aminoacyl-tRNA synthetase family. TyrS type 1 subfamily. As to quaternary structure, homodimer.

The protein resides in the cytoplasm. The enzyme catalyses tRNA(Tyr) + L-tyrosine + ATP = L-tyrosyl-tRNA(Tyr) + AMP + diphosphate + H(+). Functionally, catalyzes the attachment of tyrosine to tRNA(Tyr) in a two-step reaction: tyrosine is first activated by ATP to form Tyr-AMP and then transferred to the acceptor end of tRNA(Tyr). The sequence is that of Tyrosine--tRNA ligase from Mesomycoplasma hyopneumoniae (strain 232) (Mycoplasma hyopneumoniae).